Here is a 301-residue protein sequence, read N- to C-terminus: Probable alpha-L-glutamate ligase (301 aa).

The region spanning 104-287 is the ATP-grasp domain; that stretch reads MQLLSRKGIG…VAGLIIDFIE (184 aa). ATP is bound by residues K141, 178–179, D187, and 211–213; these read EF and RSN. D248, E260, and N262 together coordinate Mg(2+). Mn(2+)-binding residues include D248, E260, and N262.

Belongs to the RimK family. The cofactor is Mg(2+). Requires Mn(2+) as cofactor.

The chain is Probable alpha-L-glutamate ligase from Aliivibrio fischeri (strain MJ11) (Vibrio fischeri).